A 736-amino-acid chain; its full sequence is MKTEAQPSTSLLANTSWTGTVISDSVPGSQTWEDKGSLTRSATSWTSEAQVSAARVAEAQARTSQPKQISVLEALTASALNQKPTHEKVQMTEKKESEVLLARPFWSSKTEYILAQVGFSMKPSCLWRFAYLWLNSGGCSFAAIYIFMLFLVGVPLLFLEMAAGQSMRQGGMGVWKIIAPWIGGVGYSSFMVCFILGLYFNVVNSWIIFYMSQSFQFPVPWEKCPLTMNSSGFDPECERTTPSIYFWYQQALKASDRIEDGGSPVYSLVLPFFLCWCLVGAFMINGLKSTGKVIYVLVLLPCFIIVGFFIRTLLLEGAKFGLQQLVVAKISDVYNMSVWSLAGGQVLSNTGIGLGSVASLASYMPQSNNCLSDAFLVSVINLLTLLVFTSFNFCVLGFWATVITHRCCERNAEILLKLINLGKLPPDAKPPVNLLYNPTSIYNAWLSGLPQHIKSMVLREVTECNIETQFLKASEGPKFAFLSFVEAMSFLPPSVFWSFIFFLMLLAMGLSSAIGIMQGIITPLQDTFSFFRKHTKLLIVGVFLLMFVCGLFFTRPSGSYFIRLLSDYWIVFPIIVVVVFETMAVSWAYGARRFLADLTILLGHPISPIFGWLWPHLCPVVLLIIFVTMMVHLCMKPITYMSWDSSTSKEVLRPYPPWALLLMITLFAIVILPIPAYFVYCRIHRIPFRPKSGDGPMTASTSLPLSHQLTPSKEVQKEEILQVDETKYPSTCNVTS.

The Cytoplasmic segment spans residues 1-138 (MKTEAQPSTS…FAYLWLNSGG (138 aa)). The next 3 helical transmembrane spans lie at 139-159 (CSFAAIYIFMLFLVGVPLLFL), 177-197 (IIAPWIGGVGYSSFMVCFILG), and 199-219 (YFNVVNSWIIFYMSQSFQFPV). At 220-263 (PWEKCPLTMNSSGFDPECERTTPSIYFWYQQALKASDRIEDGGS) the chain is on the extracellular side. Asparagine 229 is a glycosylation site (N-linked (GlcNAc...) asparagine). A run of 4 helical transmembrane segments spans residues 264–284 (PVYSLVLPFFLCWCLVGAFMI), 290–310 (TGKVIYVLVLLPCFIIVGFFI), 338–358 (VWSLAGGQVLSNTGIGLGSVA), and 383–403 (LTLLVFTSFNFCVLGFWATVI). The Extracellular segment spans residues 404–495 (THRCCERNAE…EAMSFLPPSV (92 aa)). A run of 5 helical transmembrane segments spans residues 496 to 516 (FWSFIFFLMLLAMGLSSAIGI), 534 to 554 (HTKLLIVGVFLLMFVCGLFFT), 568 to 588 (YWIVFPIIVVVVFETMAVSWA), 609 to 629 (IFGWLWPHLCPVVLLIIFVTM), and 659 to 679 (ALLLMITLFAIVILPIPAYFV). At 680-736 (YCRIHRIPFRPKSGDGPMTASTSLPLSHQLTPSKEVQKEEILQVDETKYPSTCNVTS) the chain is on the cytoplasmic side.

Belongs to the sodium:neurotransmitter symporter (SNF) (TC 2.A.22) family. SLC6A16 subfamily. In terms of tissue distribution, highly expressed in peripheral tissues, particularly in testis, pancreas, and prostate.

Its subcellular location is the membrane. This Homo sapiens (Human) protein is Orphan sodium- and chloride-dependent neurotransmitter transporter NTT5 (SLC6A16).